Here is a 246-residue protein sequence, read N- to C-terminus: tRNA pseudouridine synthase A (246 aa).

The Nucleophile role is filled by Asp-53. Residue Tyr-112 coordinates substrate.

The protein belongs to the tRNA pseudouridine synthase TruA family. As to quaternary structure, homodimer.

The catalysed reaction is uridine(38/39/40) in tRNA = pseudouridine(38/39/40) in tRNA. Formation of pseudouridine at positions 38, 39 and 40 in the anticodon stem and loop of transfer RNAs. The protein is tRNA pseudouridine synthase A of Anaplasma phagocytophilum (strain HZ).